The primary structure comprises 312 residues: Retron Ec83 reverse transcriptase (312 aa).

One can recognise a Reverse transcriptase domain in the interval proline 14–leucine 239. Residues aspartate 97, aspartate 185, and aspartate 186 each contribute to the Mg(2+) site.

Belongs to the bacterial reverse transcriptase family.

It catalyses the reaction DNA(n) + a 2'-deoxyribonucleoside 5'-triphosphate = DNA(n+1) + diphosphate. Its function is as follows. Reverse transcriptase (RT) component of antiviral defense system retron Ec83, composed of a non-coding RNA (ncRNA), this reverse transcriptase (RT), a probable ATPase and a putative HNH endonuclease. Expression of retron Ec83 confers protection against bacteriophages T2, T4 and T6. At multiplicity of infection (MOI) of 0.02 cultures slow growth when infected with T4 but do not collapse, at MOI 2 cultures enter growth stasis. Responsible for synthesis of msDNA-Ec83 (a linear ssDNA with a 5'-terminal phosphate residue). Unlike most known msDNAs the mature product from the original strain does not have an RNA component. When the ncRNA plus RT are expressed in strain K12 / JM109 only linear DNA is seen in stationary phase cells, but logarithmic phase cells have both a linear and branched msDNA (a branched molecule with RNA linked by a 2',5'-phosphodiester bond to ssDNA, a 'classic' retron). The branched msDNA is probably the precursor for the mature linear msDNA, the precursor is cleaved endonucleolytically by ExoVII (xseA-xseB) leaving the observed mature 5'-phosphate ssDNA terminus. The retron transcript serves as primer (from a conserved internal G residue) and template for the reaction, and codes for the RT. Overexpression of the ncRNA and RT, which leads to increased levels of msDNA, is mutagenic in vivo. This may be due to a mismatch in the msDNA stem which binds and sequesters MutS and/or MutL. In Escherichia coli, this protein is Retron Ec83 reverse transcriptase.